The primary structure comprises 344 residues: Anthranilate phosphoribosyltransferase (344 aa).

5-phospho-alpha-D-ribose 1-diphosphate is bound by residues Gly-80, 83-84 (GD), Thr-88, 90-93 (NIST), 108-116 (KHGNRSVSS), and Ser-120. An anthranilate-binding site is contributed by Gly-80. Ser-92 is a Mg(2+) binding site. Asn-111 serves as a coordination point for anthranilate. Arg-166 serves as a coordination point for anthranilate. Residues Asp-225 and Glu-226 each coordinate Mg(2+).

The protein belongs to the anthranilate phosphoribosyltransferase family. Homodimer. It depends on Mg(2+) as a cofactor.

It catalyses the reaction N-(5-phospho-beta-D-ribosyl)anthranilate + diphosphate = 5-phospho-alpha-D-ribose 1-diphosphate + anthranilate. It participates in amino-acid biosynthesis; L-tryptophan biosynthesis; L-tryptophan from chorismate: step 2/5. Its function is as follows. Catalyzes the transfer of the phosphoribosyl group of 5-phosphorylribose-1-pyrophosphate (PRPP) to anthranilate to yield N-(5'-phosphoribosyl)-anthranilate (PRA). The protein is Anthranilate phosphoribosyltransferase of Petrotoga mobilis (strain DSM 10674 / SJ95).